Reading from the N-terminus, the 866-residue chain is N-alpha-acetyltransferase 15, NatA auxiliary subunit (866 aa).

TPR repeat units follow at residues 46 to 79 (GETLAMKGLTLNCLGKKEEAYELVRRGLRNDLKS), 80 to 113 (HVCWHVYGLLQRSDKKYDEAIKCYRNALKWDKDN), 148 to 184 (RASWIGYAIAYHLLEDYEMAAKILEEFRKTQQTSPDK), and 224 to 257 (LAVEETKGELLLQLCRLEDAADVYRGLQERNPEN). Lys-262 is subject to N6-acetyllysine. Ser-302 is subject to Phosphoserine. 3 TPR repeats span residues 374 to 407 (LWVQYYLAQHYDKIGQPSIALEYINTAIESTPTL), 409 to 441 (ELFLVKAKIYKHAGNIKEAARWMDEAQALDTAD), and 485 to 522 (MWFQTECAQAYKAMNKFGEALKKCYEIERHFIEITDDQ). Positions 500-866 (KFGEALKKCY…AEAEELANEI (367 aa)) are interaction with HYPK. Ser-537 and Ser-588 each carry phosphoserine. The span at 579-594 (EHEADTANMSDKELKK) shows a compositional bias: basic and acidic residues. Positions 579–642 (EHEADTANMS…EEIGGPKEEL (64 aa)) are disordered. The span at 595-604 (LRNKQRRAQK) shows a compositional bias: basic residues. A compositionally biased stretch (basic and acidic residues) spans 606–621 (AQIEEEKKNAEKEKQQ). The TPR 8 repeat unit spans residues 672 to 705 (IETHLFAFEIYFRKEKFLLMLQSVKRAFAIDSSH). N6-acetyllysine occurs at positions 735 and 756. Phosphoserine is present on residues Ser-855 and Ser-856.

As to quaternary structure, component of the N-terminal acetyltransferase A (NatA) complex composed of NAA10 or probably NAA11 and NAA15. Interacts with XRCC6, NAA50 and XRCC5. Associates with HYPK when in a complex with NAA10. Interaction with HYPK reduces the capacity to interact with NAA50. Cleaved by caspases during apoptosis.

It localises to the cytoplasm. It is found in the nucleus. Its function is as follows. Auxillary subunit of the N-terminal acetyltransferase A (NatA) complex which displays alpha (N-terminal) acetyltransferase activity. The NAT activity may be important for vascular, hematopoietic and neuronal growth and development. Required to control retinal neovascularization in adult ocular endothelial cells. In complex with XRCC6 and XRCC5 (Ku80), up-regulates transcription from the osteocalcin promoter. In Pongo abelii (Sumatran orangutan), this protein is N-alpha-acetyltransferase 15, NatA auxiliary subunit (NAA15).